The primary structure comprises 599 residues: Elongation factor 4 (599 aa).

The region spanning 4–186 (KFIRNFSIIA…AIIKHVPPPL (183 aa)) is the tr-type G domain. GTP is bound by residues 16–21 (DHGKST) and 133–136 (NKID).

It belongs to the TRAFAC class translation factor GTPase superfamily. Classic translation factor GTPase family. LepA subfamily.

Its subcellular location is the cell membrane. It catalyses the reaction GTP + H2O = GDP + phosphate + H(+). Functionally, required for accurate and efficient protein synthesis under certain stress conditions. May act as a fidelity factor of the translation reaction, by catalyzing a one-codon backward translocation of tRNAs on improperly translocated ribosomes. Back-translocation proceeds from a post-translocation (POST) complex to a pre-translocation (PRE) complex, thus giving elongation factor G a second chance to translocate the tRNAs correctly. Binds to ribosomes in a GTP-dependent manner. The protein is Elongation factor 4 of Ureaplasma urealyticum serovar 10 (strain ATCC 33699 / Western).